Reading from the N-terminus, the 332-residue chain is 2,3-diketo-L-gulonate reductase (332 aa).

Histidine 44 functions as the Proton donor in the catalytic mechanism. NAD(+) is bound by residues 168-174 (ITMVDMS), 224-225 (WK), and 304-306 (GHE).

This sequence belongs to the LDH2/MDH2 oxidoreductase family. DlgD subfamily. Homodimer.

The protein localises to the cytoplasm. It carries out the reaction 3-dehydro-L-gulonate + NAD(+) = 2,3-dioxo-L-gulonate + NADH + H(+). It catalyses the reaction 3-dehydro-L-gulonate + NADP(+) = 2,3-dioxo-L-gulonate + NADPH + H(+). Functionally, catalyzes the reduction of 2,3-diketo-L-gulonate in the presence of NADH, to form 3-keto-L-gulonate. The chain is 2,3-diketo-L-gulonate reductase from Escherichia coli (strain SMS-3-5 / SECEC).